The sequence spans 217 residues: MGQKVHPIGMRVGIIRDWDAKWYAEKEYADYLHEDLAIRKFVQKELADAAVSTIEIERAVNKVNVSLHTAKPGMVIGKGGANVDALRAKLNKLTGKQVHINIIEIKQPDLDAHLVGEGIARQLEQRVAFRRAQKQAIQRAMRAGAKGIKTQVSGRLNGADIARAEGYSEGTVPLHTLRADIDYAWEEADTTYGKLGVKVWIYRGEVLPARKNTKGGK.

The region spanning 38–106 (IRKFVQKELA…QVHINIIEIK (69 aa)) is the KH type-2 domain.

Belongs to the universal ribosomal protein uS3 family. Part of the 30S ribosomal subunit. Forms a tight complex with proteins S10 and S14.

Binds the lower part of the 30S subunit head. Binds mRNA in the 70S ribosome, positioning it for translation. In Streptococcus pneumoniae serotype 19F (strain G54), this protein is Small ribosomal subunit protein uS3.